Here is a 213-residue protein sequence, read N- to C-terminus: ATP-dependent Clp protease proteolytic subunit 3 (213 aa).

Serine 107 acts as the Nucleophile in catalysis. Histidine 132 is an active-site residue.

Belongs to the peptidase S14 family. In terms of assembly, fourteen ClpP subunits assemble into 2 heptameric rings which stack back to back to give a disk-like structure with a central cavity, resembling the structure of eukaryotic proteasomes.

Its subcellular location is the cytoplasm. It catalyses the reaction Hydrolysis of proteins to small peptides in the presence of ATP and magnesium. alpha-casein is the usual test substrate. In the absence of ATP, only oligopeptides shorter than five residues are hydrolyzed (such as succinyl-Leu-Tyr-|-NHMec, and Leu-Tyr-Leu-|-Tyr-Trp, in which cleavage of the -Tyr-|-Leu- and -Tyr-|-Trp bonds also occurs).. Functionally, cleaves peptides in various proteins in a process that requires ATP hydrolysis. Has a chymotrypsin-like activity. Plays a major role in the degradation of misfolded proteins. The polypeptide is ATP-dependent Clp protease proteolytic subunit 3 (Frankia casuarinae (strain DSM 45818 / CECT 9043 / HFP020203 / CcI3)).